The following is a 166-amino-acid chain: Large ribosomal subunit protein uL10 (166 aa).

It belongs to the universal ribosomal protein uL10 family. In terms of assembly, part of the ribosomal stalk of the 50S ribosomal subunit. The N-terminus interacts with L11 and the large rRNA to form the base of the stalk. The C-terminus forms an elongated spine to which L12 dimers bind in a sequential fashion forming a multimeric L10(L12)X complex.

Its function is as follows. Forms part of the ribosomal stalk, playing a central role in the interaction of the ribosome with GTP-bound translation factors. This is Large ribosomal subunit protein uL10 from Staphylococcus carnosus (strain TM300).